A 210-amino-acid polypeptide reads, in one-letter code: Proteasome subunit beta (210 aa).

The propeptide at 1–10 (MKELDQLTKG) is removed in mature form; by autocatalysis. Threonine 11 serves as the catalytic Nucleophile.

This sequence belongs to the peptidase T1B family. As to quaternary structure, the 20S proteasome core is composed of 14 alpha and 14 beta subunits that assemble into four stacked heptameric rings, resulting in a barrel-shaped structure. The two inner rings, each composed of seven catalytic beta subunits, are sandwiched by two outer rings, each composed of seven alpha subunits. The catalytic chamber with the active sites is on the inside of the barrel. Has a gated structure, the ends of the cylinder being occluded by the N-termini of the alpha-subunits. Is capped at one or both ends by the proteasome regulatory ATPase, PAN.

Its subcellular location is the cytoplasm. It catalyses the reaction Cleavage of peptide bonds with very broad specificity.. Its activity is regulated as follows. The formation of the proteasomal ATPase PAN-20S proteasome complex, via the docking of the C-termini of PAN into the intersubunit pockets in the alpha-rings, triggers opening of the gate for substrate entry. Interconversion between the open-gate and close-gate conformations leads to a dynamic regulation of the 20S proteasome proteolysis activity. In terms of biological role, component of the proteasome core, a large protease complex with broad specificity involved in protein degradation. The polypeptide is Proteasome subunit beta (Methanopyrus kandleri (strain AV19 / DSM 6324 / JCM 9639 / NBRC 100938)).